Here is a 167-residue protein sequence, read N- to C-terminus: Gametocyte-specific factor 1 (167 aa).

2 consecutive CHHC U11-48K-type zinc fingers follow at residues 14-41 and 48-75; these read LLQC…RKNH and LATC…DDKS. Residues Cys17, His23, His33, Cys37, Cys51, His57, His67, and Cys71 each coordinate Zn(2+).

This sequence belongs to the UPF0224 (FAM112) family.

It localises to the cytoplasm. Its function is as follows. Required for spermatogenesis and is involved in the suppression of retrotransposon transcription in male germ cells. This chain is Gametocyte-specific factor 1 (GTSF1), found in Bos taurus (Bovine).